Reading from the N-terminus, the 359-residue chain is Alanine racemase, biosynthetic (359 aa).

The Proton acceptor; specific for D-alanine role is filled by Lys-34. An N6-(pyridoxal phosphate)lysine modification is found at Lys-34. Arg-129 contributes to the substrate binding site. Tyr-255 functions as the Proton acceptor; specific for L-alanine in the catalytic mechanism. A substrate-binding site is contributed by Met-303.

This sequence belongs to the alanine racemase family. As to quaternary structure, monomer but homodimer in the presence of the substrate. The cofactor is pyridoxal 5'-phosphate.

The enzyme catalyses L-alanine = D-alanine. Its pathway is amino-acid biosynthesis; D-alanine biosynthesis; D-alanine from L-alanine: step 1/1. It participates in cell wall biogenesis; peptidoglycan biosynthesis. Its function is as follows. Catalyzes the interconversion of L-alanine and D-alanine. This Shigella dysenteriae protein is Alanine racemase, biosynthetic (alr).